A 196-amino-acid chain; its full sequence is Oocyte zinc finger protein XlCOF26 (196 aa).

C2H2-type zinc fingers lie at residues 6–28, 34–56, 62–84, 90–112, 118–140, 146–168, and 174–196; these read YSCTDCGRSFYAKGHLLNHQKNH, FTCTECGKIFTRKSNLRKHQRIH, FTCTECGKRFTEKRNLLIHQRIH, FTCTECGKSFNLWSTLRNHHKIH, FTCPECGKKFSVKNSLRKHQRTH, FTCTECGKTFTKKSTFHMHQSTH, and FTCTECGKSFAKNGNLRIHQMTH.

This sequence belongs to the krueppel C2H2-type zinc-finger protein family.

It is found in the nucleus. May be involved in transcriptional regulation. The sequence is that of Oocyte zinc finger protein XlCOF26 from Xenopus laevis (African clawed frog).